A 33-amino-acid chain; its full sequence is Kappa-sparatoxin-Hv1a (33 aa).

3 disulfides stabilise this stretch: C2–C17, C9–C22, and C16–C27. Residue W33 is modified to Tryptophan amide.

In terms of tissue distribution, expressed by the venom gland.

The protein resides in the secreted. Its function is as follows. Blocks transient outward voltage-gated potassium channels in rat ventricular myocytes (thus prolonging action-potential duration) and rat Kv4.2/KCNA4 channels expressed in Xenopus oocytes. Is also a weak blocker of calcium channels in rat cerebellar granule cells. The polypeptide is Kappa-sparatoxin-Hv1a (Heteropoda venatoria (Brown huntsman spider)).